Reading from the N-terminus, the 321-residue chain is Viral T-cell receptor beta chain-like T17T-22 (321 aa).

An N-terminal signal peptide occupies residues 1 to 28 (MISWLPSVAMGSRLLCCVALCLLGAGPA). The segment at 29–122 (DSGLTQTPRH…DSALYLCASS (94 aa)) is v segment. A glycan (N-linked (GlcNAc...) asparagine; by host) is linked at N105. Residues 123-128 (PNEDSE) are d segment. The j segment stretch occupies residues 129-144 (YGETLYFGEGSRLTVV). The interval 145–321 (EDLKKVSPPK…LMAKVKRKDS (177 aa)) is c region. Residues N214 and N264 are each glycosylated (N-linked (GlcNAc...) asparagine; by host).

This chain is Viral T-cell receptor beta chain-like T17T-22 (V-TCR), found in Feline leukemia virus.